The primary structure comprises 1020 residues: LLGL scribble cell polarity complex component 2 (1020 aa).

WD repeat units follow at residues 36-69, 76-117, 132-169, 193-227, 233-268, 282-324, 332-366, 388-464, 508-583, 592-653, 713-769, 778-830, 835-888, and 902-925; these read SALG…FMGL, VTQI…DESF, ITVV…DRTI, ALQE…LYHF, LENI…QPEP, AITR…GQQT, VIGF…VIDL, TCSH…YKLS, QKIF…FVLV, TSLA…LRQS, VRTL…KEIQ, GILV…VSAK, LTAL…VRYS, and VFTK…SLST. Serine 653 carries the phosphoserine modification. Basic residues predominate over residues 653 to 669; it reads SFRRMRRSRVSSRKRHP. Residues 653 to 689 form a disordered region; sequence SFRRMRRSRVSSRKRHPAGPPGEAQEGSAKAERPGLQ. Disordered stretches follow at residues 938 to 975 and 992 to 1020; these read AETK…PGLV and STLE…GGAE. Residues serine 965 and serine 1015 each carry the phosphoserine modification.

This sequence belongs to the WD repeat L(2)GL family. As to quaternary structure, interacts with GPSM2/LGN, PRKCI/aPKC and PARD6B/Par-6. The complex is enhanced during mitosis. Interacts with DCAF1. In terms of processing, phosphorylated at Ser-653 by PRKCI. Phosphorylation is enhanced during cell polarization induced by calcium. Phosphorylation may occur during the cell-cell contact-induced cell polarization and may contribute to the segregation of LLGL2 from the PRKCI/aPKC and PARD6B/Par-6 complex.

The protein resides in the cytoplasm. Part of a complex with GPSM2/LGN, PRKCI/aPKC and PARD6B/Par-6, which may ensure the correct organization and orientation of bipolar spindles for normal cell division. This complex plays roles in the initial phase of the establishment of epithelial cell polarity. This Homo sapiens (Human) protein is LLGL scribble cell polarity complex component 2 (LLGL2).